The primary structure comprises 444 residues: Trigger factor (444 aa).

The 86-residue stretch at 163–248 (GDIAVIDSPV…VKELRKNVPA (86 aa)) folds into the PPIase FKBP-type domain.

The protein belongs to the FKBP-type PPIase family. Tig subfamily.

The protein localises to the cytoplasm. It carries out the reaction [protein]-peptidylproline (omega=180) = [protein]-peptidylproline (omega=0). In terms of biological role, involved in protein export. Acts as a chaperone by maintaining the newly synthesized protein in an open conformation. Functions as a peptidyl-prolyl cis-trans isomerase. The polypeptide is Trigger factor (tig) (Azospirillum brasilense).